Here is a 159-residue protein sequence, read N- to C-terminus: 2-C-methyl-D-erythritol 2,4-cyclodiphosphate synthase (159 aa).

Positions 8 and 10 each coordinate a divalent metal cation. Residues 8–10 (DVH) and 34–35 (HS) each bind 4-CDP-2-C-methyl-D-erythritol 2-phosphate. H42 provides a ligand contact to a divalent metal cation. Residues 56–58 (DIG), 61–65 (FPDTD), 100–106 (AQAPKML), 132–135 (TTTE), F139, and R142 contribute to the 4-CDP-2-C-methyl-D-erythritol 2-phosphate site.

Belongs to the IspF family. As to quaternary structure, homotrimer. The cofactor is a divalent metal cation.

It catalyses the reaction 4-CDP-2-C-methyl-D-erythritol 2-phosphate = 2-C-methyl-D-erythritol 2,4-cyclic diphosphate + CMP. Its pathway is isoprenoid biosynthesis; isopentenyl diphosphate biosynthesis via DXP pathway; isopentenyl diphosphate from 1-deoxy-D-xylulose 5-phosphate: step 4/6. In terms of biological role, involved in the biosynthesis of isopentenyl diphosphate (IPP) and dimethylallyl diphosphate (DMAPP), two major building blocks of isoprenoid compounds. Catalyzes the conversion of 4-diphosphocytidyl-2-C-methyl-D-erythritol 2-phosphate (CDP-ME2P) to 2-C-methyl-D-erythritol 2,4-cyclodiphosphate (ME-CPP) with a corresponding release of cytidine 5-monophosphate (CMP). The chain is 2-C-methyl-D-erythritol 2,4-cyclodiphosphate synthase from Klebsiella pneumoniae subsp. pneumoniae (strain ATCC 700721 / MGH 78578).